The primary structure comprises 326 residues: MVYCTASLPLLLLLLVGLLAGEAFAEQCGRQAGGALCPGGLCCSQFGWCGSTSDYCGPTCQSQCGGVTPSPGGGVASLISQSVFNQMLKHRNDAACQAKGFYTYNAFIAAANSFNGFASVGDTATRKREIAAFLAQTSHETTGGWATAPDGPYAWGYCFLKEQGNPPDYCVPTAQWPCAPGKKYYGRGPIQISYNYNYGPAGRAIGYDLINNPDAVATDPVISFKTALWFWMTPQSPKPSCHNVITGRWTPSAADRAAGRLPGYGVITNIINGGIECGKGFNDKVADRIGFYKRYCDLLGVSYGSNLDCYNQRSFGVSTNPLAASS.

The first 25 residues, 1–25 (MVYCTASLPLLLLLLVGLLAGEAFA), serve as a signal peptide directing secretion. Residues 26-66 (EQCGRQAGGALCPGGLCCSQFGWCGSTSDYCGPTCQSQCGG) form the Chitin-binding type-1 domain. 7 disulfides stabilise this stretch: C28–C43, C37–C49, C42–C56, C60–C64, C96–C158, C170–C178, and C277–C309. E140 functions as the Proton donor in the catalytic mechanism.

Belongs to the glycosyl hydrolase 19 family. Chitinase class I subfamily. Expressed in the pulp of the fruit (at protein level). Expressed in mesocarp (at protein level).

It catalyses the reaction Random endo-hydrolysis of N-acetyl-beta-D-glucosaminide (1-&gt;4)-beta-linkages in chitin and chitodextrins.. Defense against chitin-containing fungal pathogens. Has in vitro antifungal activity against F.oxysporum inhibiting its growth and the branching of its hyphae. Has endochitinase activity, but no exochitinase or lysozyme activities. The polypeptide is Endochitinase (Persea americana (Avocado)).